A 309-amino-acid polypeptide reads, in one-letter code: Probable lipid kinase YegS-like (309 aa).

The 134-residue stretch at 1–134 (MAPSHWRLIL…VDLLRIDADH (134 aa)) folds into the DAGKc domain. ATP-binding positions include threonine 39, 65–71 (GDGTLSE), and threonine 96. Positions 219, 222, and 224 each coordinate Mg(2+). Glutamate 280 serves as the catalytic Proton acceptor.

The protein belongs to the diacylglycerol/lipid kinase family. YegS lipid kinase subfamily. Mg(2+) is required as a cofactor. Ca(2+) serves as cofactor.

It is found in the cytoplasm. Probably phosphorylates lipids; the in vivo substrate is unknown. The polypeptide is Probable lipid kinase YegS-like (Xanthomonas axonopodis pv. citri (strain 306)).